The following is a 209-amino-acid chain: Large ribosomal subunit protein uL3 (209 aa).

The segment at 122–151 is disordered; it reads AIKRHGQSRGPMSHGSRYHRRPGSMGPVDP.

It belongs to the universal ribosomal protein uL3 family. In terms of assembly, part of the 50S ribosomal subunit. Forms a cluster with proteins L14 and L19.

Its function is as follows. One of the primary rRNA binding proteins, it binds directly near the 3'-end of the 23S rRNA, where it nucleates assembly of the 50S subunit. This Bacillus velezensis (strain DSM 23117 / BGSC 10A6 / LMG 26770 / FZB42) (Bacillus amyloliquefaciens subsp. plantarum) protein is Large ribosomal subunit protein uL3.